The following is a 431-amino-acid chain: Reticulon-like protein B17 (431 aa).

2 disordered regions span residues 1 to 110 and 126 to 152; these read MEST…SEAV and PPRKRKTNGRPKKDKQSSAPPLCSSSD. The span at 12 to 26 shows a compositional bias: polar residues; that stretch reads TKSASRLQDSSNPPN. Residues 126 to 138 are compositionally biased toward basic residues; the sequence is PPRKRKTNGRPKK. Residues 142–152 are compositionally biased toward polar residues; the sequence is SSAPPLCSSSD. The region spanning 168 to 355 is the Reticulon domain; it reads ISDLVMWRDV…VTAFWNLTSI (188 aa). 4 helical membrane-spanning segments follow: residues 177 to 197, 202 to 222, 286 to 306, and 349 to 369; these read VAKSTLWFGFGCLSFLSSCFA, FSVFSAVSNLGLVLLCGSFLS, YGHLITLWRLSAFGFFLSFTI, and FWNLTSIRTRIFAVFIILVIF. Positions 382–415 are enriched in acidic residues; sequence EVEPVENEQEEETLPQEEETVPQEEETVPQEEEQ. Residues 382-422 are disordered; sequence EVEPVENEQEEETLPQEEETVPQEEETVPQEEEQTQPSEER.

The protein resides in the endoplasmic reticulum membrane. The sequence is that of Reticulon-like protein B17 (RTNLB17) from Arabidopsis thaliana (Mouse-ear cress).